The following is a 493-amino-acid chain: Growth-regulating factor 8 (493 aa).

A QLQ domain is found at 149 to 184; sequence AFSEAQWHELERQRNIYKYMMASVPVPPELLTPFPK. The region spanning 243-287 is the WRC domain; the sequence is DLEPWRCKRTDGKKWRCSRNVIPDQKYCERHTHKSRPRSRKHVES. Short sequence motifs (bipartite nuclear localization signal) lie at residues 248-258 and 276-283; these read RCKRTDGKKWR and KSRPRSRK. The interval 270-302 is disordered; the sequence is CERHTHKSRPRSRKHVESSHQSSHHNDIRTAKN. Basic residues predominate over residues 273 to 283; it reads HTHKSRPRSRK.

This sequence belongs to the GRF family. As to expression, predominantly expressed in shoot tips and flowers.

Its subcellular location is the nucleus. Functionally, transcription activator that plays a role in the regulation of cell expansion in leaf and cotyledons tissues. Component of a network formed by miR396, the GRFs and their interacting factors (GIFs) acting in the regulation of meristem function, at least partially through the control of cell proliferation. This Arabidopsis thaliana (Mouse-ear cress) protein is Growth-regulating factor 8 (GRF8).